The primary structure comprises 624 residues: Polycomb group protein EMF2A (624 aa).

The C2H2-type zinc finger occupies 338–359; sequence CPFCLVRCGNFKGLECHMTSSH. Residues 420-445 form a disordered region; it reads DAHIMESGSPEETQAESEDDVQEENE. The span at 432–445 shows a compositional bias: acidic residues; sequence TQAESEDDVQEENE. Residues 474-609 are VEFS-box; that stretch reads LSANRADPRN…SARTMDTCNR (136 aa).

Belongs to the VEFS (VRN2-EMF2-FIS2-SU(Z)12) family. Component of the polycomb repressive complex 2 (PRC2), which methylates 'Lys-27' residues of histone H3 (H3K27me3), leading to transcriptional repression of the affected target gene. Widely expressed. Highly expressed in shoot apical meristem and inflorescence meristem. Expressed in roots, leaves and immature seeds.

In terms of biological role, polycomb group (PcG) protein. PcG proteins act by forming multiprotein complexes, which are required to maintain the transcriptionally repressive state of homeotic genes throughout development. PcG proteins are not required to initiate repression, but to maintain it during later stages of development. They act via the methylation of histones, rendering chromatin heritably changed in its expressibility. The sequence is that of Polycomb group protein EMF2A from Oryza sativa subsp. japonica (Rice).